The chain runs to 146 residues: Large ribosomal subunit protein uL15 (146 aa).

The tract at residues 1–54 (MKLHELRPAAGSKSAPKRVGRGTGSGLGRNAGKGEKGQNARSGGGVRPGFEGGQ) is disordered. 2 stretches are compositionally biased toward gly residues: residues 21–31 (RGTGSGLGRNA) and 42–52 (SGGGVRPGFEG).

This sequence belongs to the universal ribosomal protein uL15 family. In terms of assembly, part of the 50S ribosomal subunit.

Binds to the 23S rRNA. This Clostridium perfringens (strain ATCC 13124 / DSM 756 / JCM 1290 / NCIMB 6125 / NCTC 8237 / Type A) protein is Large ribosomal subunit protein uL15.